The primary structure comprises 628 residues: Nucleoside-triphosphatase 1 (628 aa).

A signal peptide spans 1-25 (MWLPVYVPLLLVFGVSLSLPQGSLG). The Proton acceptor role is filled by Glu236. An N-linked (GlcNAc...) asparagine glycan is attached at Asn432.

The protein belongs to the GDA1/CD39 NTPase family. As to quaternary structure, homotetramer.

Its subcellular location is the secreted. It is found in the parasitophorous vacuole. The catalysed reaction is a ribonucleoside 5'-triphosphate + H2O = a ribonucleoside 5'-diphosphate + phosphate + H(+). In terms of biological role, may perform an important processing step in the conversion of high energy nucleotides prior to uptake by the parasite and may contribute to intracellular survival and virulence. NTPAse-I has a specific activity 4.5-fold higher than NTPAse-II in hydrolysis of ATP. The primary difference between these isozymes lies in their ability to hydrolyze nucleoside triphosphate versus diphosphate substrates. While NTPAse-II hydrolyzes ATP to ADP and ADP to AMP at almost the same rate, NTPAse-I hydrolyzes ADP to AMP at a much slower rate (0.7% of the rate for ATP). The protein is Nucleoside-triphosphatase 1 (NTP3) of Toxoplasma gondii.